A 482-amino-acid chain; its full sequence is GPI mannosyltransferase 3 (482 aa).

The helical transmembrane segment at 12–32 (LFAFIFIFRLANSFAIETFFQ) threads the bilayer. The N-linked (GlcNAc...) asparagine glycan is linked to Asn80. A run of 4 helical transmembrane segments spans residues 114–134 (KLAW…YVIT), 137–155 (FSNN…FWPW), 175–195 (IIRP…LISI), and 199–219 (LKWV…NTAL). An N-linked (GlcNAc...) asparagine glycan is attached at Asn242. 3 helical membrane-spanning segments follow: residues 252–272 (WHFY…PLMI), 274–294 (GLKK…FSLI), and 324–344 (FVLI…NVHE).

It belongs to the glycosyltransferase 22 family. PIGB subfamily.

It is found in the endoplasmic reticulum membrane. The protein operates within glycolipid biosynthesis; glycosylphosphatidylinositol-anchor biosynthesis. Mannosyltransferase involved in glycosylphosphatidylinositol-anchor biosynthesis. Transfers the third mannose to Man2-GlcN-acyl-PI during GPI precursor assembly. The sequence is that of GPI mannosyltransferase 3 (GPI10) from Candida albicans (strain SC5314 / ATCC MYA-2876) (Yeast).